Consider the following 73-residue polypeptide: uncharacterized protein (73 aa).

The first 30 residues, 1–30 (MVDFYFIEEKVAYRAAFTTTGKIAATLGLA), serve as a signal peptide directing secretion.

This is an uncharacterized protein from Archaeoglobus fulgidus (strain ATCC 49558 / DSM 4304 / JCM 9628 / NBRC 100126 / VC-16).